We begin with the raw amino-acid sequence, 158 residues long: Transcription elongation factor GreB (158 aa).

Residues K53–I75 adopt a coiled-coil conformation.

Belongs to the GreA/GreB family. GreB subfamily.

In terms of biological role, necessary for efficient RNA polymerase transcription elongation past template-encoded arresting sites. The arresting sites in DNA have the property of trapping a certain fraction of elongating RNA polymerases that pass through, resulting in locked ternary complexes. Cleavage of the nascent transcript by cleavage factors such as GreA or GreB allows the resumption of elongation from the new 3'terminus. GreB releases sequences of up to 9 nucleotides in length. This Pasteurella multocida (strain Pm70) protein is Transcription elongation factor GreB.